The following is a 528-amino-acid chain: DNA damage-binding protein cmr1 (528 aa).

Disordered regions lie at residues A32–A98 and D217–P243. A compositionally biased stretch (basic residues) spans K52 to V62. The stretch at L185–A226 is one WD 1 repeat. The span at E230 to D242 shows a compositional bias: acidic residues. 6 WD repeats span residues P250 to K290, S297 to V337, L342 to P382, V389 to E428, G451 to L494, and D497 to M528.

This sequence belongs to the WD repeat DDB2/WDR76 family.

Its function is as follows. DNA-binding protein that binds to both single- and double-stranded DNA. Binds preferentially to UV-damaged DNA. May be involved in DNA-metabolic processes. The chain is DNA damage-binding protein cmr1 from Aspergillus fumigatus (strain CBS 144.89 / FGSC A1163 / CEA10) (Neosartorya fumigata).